A 136-amino-acid polypeptide reads, in one-letter code: Protein NrdI (136 aa).

Belongs to the NrdI family.

Probably involved in ribonucleotide reductase function. The protein is Protein NrdI of Salmonella arizonae (strain ATCC BAA-731 / CDC346-86 / RSK2980).